The chain runs to 411 residues: Arginine deiminase (411 aa).

C401 acts as the Amidino-cysteine intermediate in catalysis.

Belongs to the arginine deiminase family.

It localises to the cytoplasm. It carries out the reaction L-arginine + H2O = L-citrulline + NH4(+). It participates in amino-acid degradation; L-arginine degradation via ADI pathway; carbamoyl phosphate from L-arginine: step 1/2. The chain is Arginine deiminase from Staphylococcus aureus (strain MRSA252).